We begin with the raw amino-acid sequence, 202 residues long: Putative 3-methyladenine DNA glycosylase (202 aa).

The protein belongs to the DNA glycosylase MPG family.

This chain is Putative 3-methyladenine DNA glycosylase, found in Staphylococcus aureus (strain MRSA252).